The chain runs to 429 residues: 3-phosphoshikimate 1-carboxyvinyltransferase (429 aa).

3-phosphoshikimate is bound by residues Lys-11, Ser-12, and Arg-16. Lys-11 lines the phosphoenolpyruvate pocket. Phosphoenolpyruvate contacts are provided by Gly-82 and Arg-110. Residues Ser-155, Gln-157, Asp-302, and Lys-329 each coordinate 3-phosphoshikimate. Residue Gln-157 participates in phosphoenolpyruvate binding. Catalysis depends on Asp-302, which acts as the Proton acceptor. Phosphoenolpyruvate contacts are provided by Arg-333 and Arg-385.

The protein belongs to the EPSP synthase family. As to quaternary structure, monomer.

Its subcellular location is the cytoplasm. It carries out the reaction 3-phosphoshikimate + phosphoenolpyruvate = 5-O-(1-carboxyvinyl)-3-phosphoshikimate + phosphate. It participates in metabolic intermediate biosynthesis; chorismate biosynthesis; chorismate from D-erythrose 4-phosphate and phosphoenolpyruvate: step 6/7. Functionally, catalyzes the transfer of the enolpyruvyl moiety of phosphoenolpyruvate (PEP) to the 5-hydroxyl of shikimate-3-phosphate (S3P) to produce enolpyruvyl shikimate-3-phosphate and inorganic phosphate. The polypeptide is 3-phosphoshikimate 1-carboxyvinyltransferase (Helicobacter pylori (strain J99 / ATCC 700824) (Campylobacter pylori J99)).